The primary structure comprises 304 residues: Small ribosomal subunit protein uS3 (304 aa).

The KH type-2 domain occupies 17–86; the sequence is IDEFFAEELG…DPQVDVQEVD (70 aa). Positions 216-304 are disordered; that stretch reads LLEGEPEDSE…DEMDEEGDDE (89 aa).

This sequence belongs to the universal ribosomal protein uS3 family. As to quaternary structure, part of the 30S ribosomal subunit.

In terms of biological role, binds the lower part of the 30S subunit head. The protein is Small ribosomal subunit protein uS3 of Haloarcula marismortui (strain ATCC 43049 / DSM 3752 / JCM 8966 / VKM B-1809) (Halobacterium marismortui).